The sequence spans 515 residues: Thioredoxin domain-containing protein 2 (515 aa).

The disordered stretch occupies residues 1-23 (MTLNNGGKANERGSNENPLQALS). 2 positions are modified to phosphoserine: S14 and S39. Residues 51-390 (TLHMSTEESE…NTIKSSEEDV (340 aa)) form a disordered region. Composition is skewed to polar residues over residues 61–75 (FPQQ…SENT) and 85–136 (KPSS…TNST). 21 repeat units span residues 92-106 (QLKQ…GYSK), 107-121 (QTNY…AKTT), 122-136 (HPKQ…TNST), 137-151 (HYRE…EDII), 152-166 (QPKK…EDII), 167-181 (QSKK…EDII), 182-196 (QSKK…EDII), 197-211 (QSKK…EDII), 212-226 (QSKK…EDII), 227-241 (QPKK…EDSV), 242-256 (PSKK…EDSV), 257-271 (QPKK…EDSV), 272-286 (QSKE…KDSI), 287-301 (QSKE…QDSI), 302-316 (QSKE…KDSV), 317-331 (QSKE…HESI), 332-346 (QSKE…KDSI), 347-362 (PSKE…DTIQ), 363-375 (SQEE…EDTI), 376-390 (QSQE…EEDV), and 391-405 (QLSE…AEIE). The 21 X 15 AA approximate tandem repeat of Q-P-K-X-G-D-I-P-K-S-[PS]-E-[KE]-X-I stretch occupies residues 92–405 (QLKQENISKS…KLLGLGAEIE (314 aa)). Composition is skewed to basic and acidic residues over residues 137–293 (HYRE…ETKV) and 302–358 (QSKE…KSPE). Phosphoserine is present on S146. Residues 375–384 (IQSQEGNTIK) show a composition bias toward polar residues. The Thioredoxin domain occupies 398–515 (LGLGAEIETL…KLERSISELK (118 aa)). Cysteines 442 and 445 form a disulfide.

As to expression, testis-specific. Strongly expressed in the testicular seminiferous tubules, mostly in the round spermatids.

Its subcellular location is the cytoplasm. Its function is as follows. Probably plays a regulatory role in sperm development. May participate in regulation of fibrous sheath (FS) assembly by supporting the formation of disulfide bonds during sperm tail morphogenesis. May also be required to rectify incorrect disulfide pairing and generate suitable pairs between the FS constituents. Can reduce disulfide bonds in vitro in the presence of NADP and thioredoxin reductase. This is Thioredoxin domain-containing protein 2 (Txndc2) from Mus musculus (Mouse).